The sequence spans 20 residues: Unknown protein NF019 from 2D-PAGE (20 aa).

The sequence is that of Unknown protein NF019 from 2D-PAGE from Naegleria fowleri (Brain eating amoeba).